The chain runs to 439 residues: Glutamate--tRNA ligase 2 (439 aa).

A 'HIGH' region motif is present at residues 6 to 16 (PSPTGDMHIGN). The short motif at 232 to 236 (KMSKR) is the 'KMSKS' region element. K235 is a binding site for ATP.

Belongs to the class-I aminoacyl-tRNA synthetase family. Glutamate--tRNA ligase type 1 subfamily. As to quaternary structure, monomer.

The protein resides in the cytoplasm. It carries out the reaction tRNA(Glu) + L-glutamate + ATP = L-glutamyl-tRNA(Glu) + AMP + diphosphate. Catalyzes the attachment of glutamate to tRNA(Glu) in a two-step reaction: glutamate is first activated by ATP to form Glu-AMP and then transferred to the acceptor end of tRNA(Glu). The protein is Glutamate--tRNA ligase 2 of Helicobacter pylori (strain HPAG1).